Here is a 247-residue protein sequence, read N- to C-terminus: Triosephosphate isomerase (247 aa).

8–10 (NWK) contacts substrate. Histidine 94 acts as the Electrophile in catalysis. Glutamate 165 functions as the Proton acceptor in the catalytic mechanism. Substrate is bound by residues glycine 171 and serine 210.

It belongs to the triosephosphate isomerase family. In terms of assembly, homodimer.

The protein localises to the cytoplasm. The catalysed reaction is D-glyceraldehyde 3-phosphate = dihydroxyacetone phosphate. Its pathway is carbohydrate biosynthesis; gluconeogenesis. It functions in the pathway carbohydrate degradation; glycolysis; D-glyceraldehyde 3-phosphate from glycerone phosphate: step 1/1. In terms of biological role, involved in the gluconeogenesis. Catalyzes stereospecifically the conversion of dihydroxyacetone phosphate (DHAP) to D-glyceraldehyde-3-phosphate (G3P). This is Triosephosphate isomerase from Aquifex aeolicus (strain VF5).